Here is a 439-residue protein sequence, read N- to C-terminus: Casein kinase I homolog 3 (439 aa).

The Protein kinase domain occupies 15-286; it reads YRVGKKIGEG…LRSLFDSLLL (272 aa). ATP contacts are provided by residues 21-29 and Lys44; that span reads IGEGSFGML. The active-site Proton acceptor is Asp134. Residues 366 to 426 form a disordered region; it reads DGIPGKAASP…PSKEKSRKKF (61 aa). Positions 372–413 are enriched in low complexity; sequence AASPQVQQQQQTSSAQQQQPQRVEQPAPQTTQPTQVDTQQAA.

It belongs to the protein kinase superfamily. CK1 Ser/Thr protein kinase family. Casein kinase I subfamily.

The protein resides in the cytoplasm. It catalyses the reaction L-seryl-[protein] + ATP = O-phospho-L-seryl-[protein] + ADP + H(+). The enzyme catalyses L-threonyl-[protein] + ATP = O-phospho-L-threonyl-[protein] + ADP + H(+). Its function is as follows. Casein kinases are operationally defined by their preferential utilization of acidic proteins such as caseins as substrates. The polypeptide is Casein kinase I homolog 3 (cki3) (Schizosaccharomyces pombe (strain 972 / ATCC 24843) (Fission yeast)).